We begin with the raw amino-acid sequence, 540 residues long: uncharacterized protein (540 aa).

ABC transporter domains follow at residues 2 to 252 (IAVN…KLSQ) and 320 to 537 (LRVE…LTEL). 34–41 (GANGAGKS) provides a ligand contact to ATP.

This sequence belongs to the ABC transporter superfamily.

This is an uncharacterized protein from Bacillus subtilis (strain 168).